The sequence spans 292 residues: MAASIARGCQAAKGLGPSFRSARALLPVSTSVASRVLAGPGRRQITGPSEPGVFQPPPKPVIVDKRGPQRRESRFLSPEFIPPRGRTNPLKFQIERKDMLERRKILHIPEFYVGSILRVTTADPYANGKTSQFLGICIQRSGKGLGATFILRNTIEGQGVEICFELYNPRIQEIQVVKLEKRLDDSLLYLRDALPEYSTFDMNMKPVAQEPSREVPINQLKVKMKPKPWSKRWERPKFNVKGIRFDLCLTEEQMKEAQKWSQPWLEFDMMREYDTSKIETAIWNEIEASKSS.

A disordered region spans residues 39–68 (GPGRRQITGPSEPGVFQPPPKPVIVDKRGP). The residue at position 77 (serine 77) is a Phosphoserine.

It belongs to the bacterial ribosomal protein bL19 family. Component of the mitochondrial ribosome large subunit (39S) which comprises a 16S rRNA and about 50 distinct proteins.

It is found in the mitochondrion. The chain is Large ribosomal subunit protein bL19m (MRPL19) from Bos taurus (Bovine).